The following is a 116-amino-acid chain: MRVKGGTVTRARRKKWIKLAKGYFGHKSIGYKVAKQAVVKSWTYAFRDRKQVKRDYRKLWISRISAAVRLEGLSYSKFINGLKKSNITINRKMLSELAINEPQVFSQLIAIARDSE.

Belongs to the bacterial ribosomal protein bL20 family.

Its function is as follows. Binds directly to 23S ribosomal RNA and is necessary for the in vitro assembly process of the 50S ribosomal subunit. It is not involved in the protein synthesizing functions of that subunit. This Mycoplasmopsis agalactiae (strain NCTC 10123 / CIP 59.7 / PG2) (Mycoplasma agalactiae) protein is Large ribosomal subunit protein bL20.